Consider the following 359-residue polypeptide: CMP-N-acetylneuraminate-poly-alpha-2,8-sialyltransferase (359 aa).

The Cytoplasmic portion of the chain corresponds to 1–7 (MRSIRKR). The helical; Signal-anchor for type II membrane protein transmembrane segment at 8–20 (WTICTISLLLIFY) threads the bilayer. Residues 21–359 (KTKEIARTEE…KLTTGKCVKQ (339 aa)) lie on the Lumenal side of the membrane. N-linked (GlcNAc...) asparagine glycosylation is found at N50, N74, and N119. 2 cysteine pairs are disulfide-bonded: C142-C292 and C156-C356. Residues N147 and N170 each contribute to the CMP-N-acetyl-beta-neuraminate site. N-linked (GlcNAc...) asparagine glycans are attached at residues N204 and N219. CMP-N-acetyl-beta-neuraminate contacts are provided by S279, T280, G281, and W301. H331 (proton donor/acceptor) is an active-site residue.

It belongs to the glycosyltransferase 29 family. Post-translationally, autopolysialylated.

The protein resides in the golgi apparatus membrane. It is found in the secreted. It catalyses the reaction [N-acetyl-alpha-D-neuraminosyl-(2-&gt;8)](n) + CMP-N-acetyl-beta-neuraminate = [N-acetyl-alpha-D-neuraminosyl-(2-&gt;8)](n+1) + CMP + H(+). Catalyzes the transfer of a sialic acid from a CMP-linked sialic acid donor onto a terminal alpha-2,3-, alpha-2,6-, or alpha-2,8-linked sialic acid of an N-linked glycan protein acceptor through alpha-2,8-linkages. Therefore, participates in polysialic acid synthesis on various sialylated N-acetyllactosaminyl oligosaccharides, including NCAM1 N-glycans, FETUB N-glycans and AHSG. It is noteworthy that alpha-2,3-linked sialic acid is apparently a better acceptor than alpha-2,6-linked sialic acid. This is CMP-N-acetylneuraminate-poly-alpha-2,8-sialyltransferase (ST8SIA4) from Pan troglodytes (Chimpanzee).